We begin with the raw amino-acid sequence, 315 residues long: Tryptophan prenyltransferase ComQ (315 aa).

Aspartate 95 and aspartate 99 together coordinate Mg(2+).

The protein belongs to the FPP/GGPP synthase family. It depends on Mg(2+) as a cofactor.

Its subcellular location is the cell membrane. The catalysed reaction is L-tryptophyl-[protein] + (2E,6E)-farnesyl diphosphate = (2S,3R)-3-farnesyl-2,3-dihydro-2,N(alpha)-cyclo-L-tryptophyl-[protein] + diphosphate. Functionally, part of a major quorum-sensing system that regulates the development of genetic competence. Involved in the maturation of the competence pheromone ComX. Acts by catalyzing the transfer of a farnesyl group on the ComX pheromone. In vitro, can also catalyze the farnesylation of single tryptophan and tryptophan derivatives. This Bacillus subtilis subsp. natto (strain BEST195) protein is Tryptophan prenyltransferase ComQ.